A 509-amino-acid polypeptide reads, in one-letter code: ATP synthase subunit alpha (509 aa).

169-176 is a binding site for ATP; it reads GDRQTGKT.

The protein belongs to the ATPase alpha/beta chains family. F-type ATPases have 2 components, CF(1) - the catalytic core - and CF(0) - the membrane proton channel. CF(1) has five subunits: alpha(3), beta(3), gamma(1), delta(1), epsilon(1). CF(0) has three main subunits: a(1), b(2) and c(9-12). The alpha and beta chains form an alternating ring which encloses part of the gamma chain. CF(1) is attached to CF(0) by a central stalk formed by the gamma and epsilon chains, while a peripheral stalk is formed by the delta and b chains.

It is found in the cell inner membrane. It catalyses the reaction ATP + H2O + 4 H(+)(in) = ADP + phosphate + 5 H(+)(out). Its function is as follows. Produces ATP from ADP in the presence of a proton gradient across the membrane. The alpha chain is a regulatory subunit. In Rhizobium johnstonii (strain DSM 114642 / LMG 32736 / 3841) (Rhizobium leguminosarum bv. viciae), this protein is ATP synthase subunit alpha.